The chain runs to 228 residues: Cytochrome c oxidase subunit 2 (228 aa).

At methionine 1–histidine 26 the chain is on the mitochondrial intermembrane side. A helical membrane pass occupies residues alanine 27–asparagine 48. Residues lysine 49–glutamate 62 lie on the Mitochondrial matrix side of the membrane. Residues threonine 63–arginine 82 form a helical membrane-spanning segment. The Mitochondrial intermembrane segment spans residues leucine 83–serine 228. Cu cation is bound by residues histidine 161, cysteine 196, glutamate 198, cysteine 200, histidine 204, and methionine 207. Glutamate 198 lines the Mg(2+) pocket.

This sequence belongs to the cytochrome c oxidase subunit 2 family. Component of the cytochrome c oxidase (complex IV, CIV), a multisubunit enzyme composed of a catalytic core of 3 subunits and several supernumerary subunits. The complex exists as a monomer or a dimer and forms supercomplexes (SCs) in the inner mitochondrial membrane with ubiquinol-cytochrome c oxidoreductase (cytochrome b-c1 complex, complex III, CIII). The cofactor is Cu cation.

The protein localises to the mitochondrion inner membrane. The enzyme catalyses 4 Fe(II)-[cytochrome c] + O2 + 8 H(+)(in) = 4 Fe(III)-[cytochrome c] + 2 H2O + 4 H(+)(out). In terms of biological role, component of the cytochrome c oxidase, the last enzyme in the mitochondrial electron transport chain which drives oxidative phosphorylation. The respiratory chain contains 3 multisubunit complexes succinate dehydrogenase (complex II, CII), ubiquinol-cytochrome c oxidoreductase (cytochrome b-c1 complex, complex III, CIII) and cytochrome c oxidase (complex IV, CIV), that cooperate to transfer electrons derived from NADH and succinate to molecular oxygen, creating an electrochemical gradient over the inner membrane that drives transmembrane transport and the ATP synthase. Cytochrome c oxidase is the component of the respiratory chain that catalyzes the reduction of oxygen to water. Electrons originating from reduced cytochrome c in the intermembrane space (IMS) are transferred via the dinuclear copper A center (CU(A)) of subunit 2 and heme A of subunit 1 to the active site in subunit 1, a binuclear center (BNC) formed by heme A3 and copper B (CU(B)). The BNC reduces molecular oxygen to 2 water molecules using 4 electrons from cytochrome c in the IMS and 4 protons from the mitochondrial matrix. The protein is Cytochrome c oxidase subunit 2 (COII) of Artemia franciscana (Brine shrimp).